The following is a 312-amino-acid chain: tRNA dimethylallyltransferase (312 aa).

15 to 22 (GPTAAGKS) provides a ligand contact to ATP. 17–22 (TAAGKS) serves as a coordination point for substrate. The interval 40–43 (DSMQ) is interaction with substrate tRNA.

It belongs to the IPP transferase family. In terms of assembly, monomer. It depends on Mg(2+) as a cofactor.

The enzyme catalyses adenosine(37) in tRNA + dimethylallyl diphosphate = N(6)-dimethylallyladenosine(37) in tRNA + diphosphate. Its function is as follows. Catalyzes the transfer of a dimethylallyl group onto the adenine at position 37 in tRNAs that read codons beginning with uridine, leading to the formation of N6-(dimethylallyl)adenosine (i(6)A). This is tRNA dimethylallyltransferase from Streptomyces avermitilis (strain ATCC 31267 / DSM 46492 / JCM 5070 / NBRC 14893 / NCIMB 12804 / NRRL 8165 / MA-4680).